A 246-amino-acid polypeptide reads, in one-letter code: V-type proton ATPase subunit D 1 (246 aa).

Belongs to the V-ATPase D subunit family. In terms of assembly, V-ATPase is a heteromultimeric enzyme made up of two complexes: the ATP-hydrolytic V1 complex and the proton translocation V0 complex. The V1 complex consists of three catalytic AB heterodimers that form a heterohexamer, three peripheral stalks each consisting of EG heterodimers, one central rotor including subunits D and F, and the regulatory subunits C and H. The proton translocation complex V0 consists of the proton transport subunit a, a ring of proteolipid subunits c9c'', rotary subunit d, subunits e and f, and the accessory subunits VhaAC45 and ATP6AP2.

In terms of biological role, subunit of the V1 complex of vacuolar(H+)-ATPase (V-ATPase), a multisubunit enzyme composed of a peripheral complex (V1) that hydrolyzes ATP and a membrane integral complex (V0) that translocates protons. V-ATPase is responsible for acidifying and maintaining the pH of intracellular compartments and in some cell types, is targeted to the plasma membrane, where it is responsible for acidifying the extracellular environment. The sequence is that of V-type proton ATPase subunit D 1 (Vha36-1) from Drosophila melanogaster (Fruit fly).